We begin with the raw amino-acid sequence, 83 residues long: RNA-binding protein Hfq (83 aa).

In terms of domain architecture, Sm spans 9-69 (DYFLNQLRKD…ISTFAPARNV (61 aa)).

Belongs to the Hfq family. In terms of assembly, homohexamer.

Functionally, RNA chaperone that binds small regulatory RNA (sRNAs) and mRNAs to facilitate mRNA translational regulation in response to envelope stress, environmental stress and changes in metabolite concentrations. Also binds with high specificity to tRNAs. This Exiguobacterium sibiricum (strain DSM 17290 / CCUG 55495 / CIP 109462 / JCM 13490 / 255-15) protein is RNA-binding protein Hfq.